A 456-amino-acid polypeptide reads, in one-letter code: UDP-N-acetylmuramoylalanine--D-glutamate ligase (456 aa).

121–127 is a binding site for ATP; that stretch reads GTNGKTT.

It belongs to the MurCDEF family.

It is found in the cytoplasm. The catalysed reaction is UDP-N-acetyl-alpha-D-muramoyl-L-alanine + D-glutamate + ATP = UDP-N-acetyl-alpha-D-muramoyl-L-alanyl-D-glutamate + ADP + phosphate + H(+). It participates in cell wall biogenesis; peptidoglycan biosynthesis. In terms of biological role, cell wall formation. Catalyzes the addition of glutamate to the nucleotide precursor UDP-N-acetylmuramoyl-L-alanine (UMA). The protein is UDP-N-acetylmuramoylalanine--D-glutamate ligase of Desulfotalea psychrophila (strain LSv54 / DSM 12343).